The sequence spans 567 residues: Sensor histidine kinase MtrB (567 aa).

Over residues 1–15 (MIFGSRRRIRGRRGR) the composition is skewed to basic residues. Residues 1-20 (MIFGSRRRIRGRRGRSGPMT) form a disordered region. The next 2 helical transmembrane spans lie at 42–62 (VVALTLGLSLAVILALGFVLT) and 213–233 (GTMATGGLVLLVLLAGIALLV). The region spanning 235–287 (RQVVVPVRSASRIAERFAEGHLSERMPVRGEDDMARLAVSFNDMAESLSRQIA) is the HAMP domain. The Histidine kinase domain maps to 302–519 (DVSHELRTPL…CFRLTLPMVR (218 aa)). Position 305 is a phosphohistidine; by autocatalysis (His-305). The segment covering 529–551 (PMKPIPQPVLQPVAQPNPQPMPP) has biased composition (pro residues). Residues 529 to 567 (PMKPIPQPVLQPVAQPNPQPMPPEYKERQRPREHAEWSG) form a disordered region. Residues 552–567 (EYKERQRPREHAEWSG) are compositionally biased toward basic and acidic residues.

As to quaternary structure, interacts with MrtA. Interacts with LpqB, probably extracytoplasmically via MtrB's sensor domain. It depends on Mg(2+) as a cofactor. Requires Ca(2+) as cofactor. In terms of processing, the C-terminal domain (residues 234-567) autophosphorylates.

It is found in the cell membrane. The catalysed reaction is ATP + protein L-histidine = ADP + protein N-phospho-L-histidine.. Ca(2+) ions inhibit the phosphotransfer from MtrB to MtrA. In terms of biological role, member of the two-component regulatory system MtrA/MtrB. Probably functions as a membrane-associated protein kinase that phosphorylates MtrA in response to environmental signals. Autophosphorylates and transfers phosphate to MtrA in vitro. Overexpression of MtrA alone decreases bacterial virulence in mouse infection; co-expression of MtrA and MtrB restores normal bacterial growth, suggesting that bacterial growth in macrophages requires an optimal ratio of MtrB to MtrA. Probably plays a role in cell division. This Mycobacterium tuberculosis (strain ATCC 25618 / H37Rv) protein is Sensor histidine kinase MtrB (mtrB).